The chain runs to 189 residues: HTH-type transcriptional regulator Hpr (189 aa).

Positions 12–156 (ALLYSHKIVQ…ISAIVRRLYG (145 aa)) constitute an HTH marR-type domain. The H-T-H motif DNA-binding region spans 62–85 (ISEIAKYGVMHVSTAFNFSKKLED).

Homodimer.

Its function is as follows. Negative regulator of protease production and sporulation. In Exiguobacterium sibiricum (strain DSM 17290 / CCUG 55495 / CIP 109462 / JCM 13490 / 255-15), this protein is HTH-type transcriptional regulator Hpr.